The primary structure comprises 639 residues: Coiled-coil domain-containing protein 93 homolog (639 aa).

Residues 250–275 are disordered; the sequence is KLESQLSGKDGSGKDTTEAEREEEEK. Over residues 260-275 the composition is skewed to basic and acidic residues; that stretch reads GSGKDTTEAEREEEEK. A coiled-coil region spans residues 332-492; it reads AEKLHRQKIT…KNRDISLIQR (161 aa).

It belongs to the CCDC93 family.

The polypeptide is Coiled-coil domain-containing protein 93 homolog (Dictyostelium discoideum (Social amoeba)).